We begin with the raw amino-acid sequence, 299 residues long: Putative peptidyl-prolyl cis-trans isomerase HP_0175 (299 aa).

The N-terminal stretch at 1–21 (MKKNILNLALVGALSTSFLMA) is a signal peptide. The PpiC domain maps to 154–253 (KQEAHARHIL…FGYHIIYLIS (100 aa)).

The catalysed reaction is [protein]-peptidylproline (omega=180) = [protein]-peptidylproline (omega=0). The chain is Putative peptidyl-prolyl cis-trans isomerase HP_0175 from Helicobacter pylori (strain ATCC 700392 / 26695) (Campylobacter pylori).